The following is a 29-amino-acid chain: NVQLDPFFQEQQQYYPQQQAFFLLQQQQN.

This chain is Prolamin alpha-1, found in Dactylis glomerata (Orchard grass).